The sequence spans 570 residues: Periplasmic trehalase (570 aa).

The first 34 residues, 1-34 (MIPPEIRRSVLLQKAIKLALAGTLLTFASFSATA), serve as a signal peptide directing secretion. Substrate is bound by residues arginine 159, 166-167 (WD), asparagine 203, 212-214 (RSQ), 284-286 (RPE), and glycine 317. Catalysis depends on proton donor/acceptor residues aspartate 319 and glutamate 503. Glutamate 518 is a substrate binding site. The disordered stretch occupies residues 544-570 (KPCDSVPSTRPASLSATPTKTPSAATQ). Residues 554–570 (PASLSATPTKTPSAATQ) show a composition bias toward low complexity.

Belongs to the glycosyl hydrolase 37 family. As to quaternary structure, monomer.

It localises to the periplasm. It carries out the reaction alpha,alpha-trehalose + H2O = alpha-D-glucose + beta-D-glucose. In terms of biological role, provides the cells with the ability to utilize trehalose at high osmolarity by splitting it into glucose molecules that can subsequently be taken up by the phosphotransferase-mediated uptake system. In Salmonella dublin (strain CT_02021853), this protein is Periplasmic trehalase.